The sequence spans 251 residues: Insulin-induced gene 1 protein (251 aa).

The Cytoplasmic portion of the chain corresponds to 1–58; that stretch reads MQTLEEHCWSCSCTRGRDKKGTKVSAWLARRVGKAMSSLNSLLSLAYSTLASSEGRSL. A helical transmembrane segment spans residues 59 to 81; the sequence is IQRSLVLFTVGVFLALVLNLLQI. The Extracellular segment spans residues 82–100; it reads QRNVTLFPEEVIATIFSSA. The chain crosses the membrane as a helical span at residues 101 to 118; the sequence is WWVPPCCGTAAAVVGLLY. Topologically, residues 119-133 are cytoplasmic; sequence PCIDSRIGEPHKFKR. A helical transmembrane segment spans residues 134-156; the sequence is EWASVMRCIAVFVGINHASAKLD. The Extracellular segment spans residues 157-159; it reads FAN. Residues 160–178 form a helical membrane-spanning segment; the sequence is NVQLSLTLAALSLGLWWTF. Residues 179 to 183 are Cytoplasmic-facing; that stretch reads DRSRS. A helical membrane pass occupies residues 184-205; sequence GLGLGITIAFLATLITQFLVYN. Over 206–219 the chain is Extracellular; it reads GVYQYTSPDFLYIR. Residues 220 to 237 traverse the membrane as a helical segment; it reads SWLPCIFFSGGVTVGNIG. Residues 238–251 lie on the Cytoplasmic side of the membrane; that stretch reads RQLAMGSSEKTHGD. Positions 245–251 match the KxHxx motif; that stretch reads SEKTHGD.

The protein belongs to the INSIG family. As to quaternary structure, interacts with scap; interaction is direct and only takes place in the presence of sterols; it prevents interaction between scap and the coat protein complex II (COPII). Associates with the SCAP-SREBP complex; association is mediated via its interaction with scap and only takes place in the presence of sterols.

The protein resides in the endoplasmic reticulum membrane. Oxysterol-binding protein that mediates feedback control of cholesterol synthesis by controlling both endoplasmic reticulum to Golgi transport of scap and degradation of hmgcr. Acts as a negative regulator of cholesterol biosynthesis by mediating the retention of the SCAP-SREBP complex in the endoplasmic reticulum, thereby blocking the processing of sterol regulatory element-binding proteins (SREBPs). Binds oxysterol, including 25-hydroxycholesterol, regulating interaction with scap and retention of the SCAP-SREBP complex in the endoplasmic reticulum. In presence of oxysterol, interacts with scap, retaining the SCAP-SREBP complex in the endoplasmic reticulum, thereby preventing scap from escorting SREBPs to the Golgi. Sterol deprivation reduces oxysterol-binding, disrupting the interaction between insig1 and scap, thereby promoting Golgi transport of the SCAP-SREBP complex, followed by processing and nuclear translocation of SREBPs. Also regulates cholesterol synthesis by regulating degradation of hmgcr. The polypeptide is Insulin-induced gene 1 protein (Xenopus laevis (African clawed frog)).